The chain runs to 435 residues: MHYYCISFTHKNTDIATREKLSFSNEDKKRELLKLIHTNNKILESLVLSTCNRVEIFLFVGDVESINEHILKTLSLLCGVDRENLSTKADFYEDSGAIHHLFSVASSLDSLVIGETQIAGQLKDAYKFALQEQRCGVHLTRAVHYAFKCAANVRNQTEISKNPISVASVAVAKAKELVNLENKTAVVVGAGEMSELACKHLLNAKAKVLILNRDIQNAQKLCEDLGENASYESIANLKEALNQYEIFFSATNAPHAIITNDLLEEKDYSRYFFDIAVPRDIDVKANEKNIVYAVDDLEEVVRKNLTLREHQAQIAYSIVGTMTNEFFQHLSKLATLPLVKQLRLQADEIAKEQLQKAIDKGYLKHSNHEEARKLIRQVMNAFLHHPSVNLKKLSGTMQNDSVINAMRYVFDLKNENMEGLNLYKCEFNLENNHEI.

Substrate-binding positions include 50–53 (TCNR), Ser110, 115–117 (ETQ), and Gln121. Cys51 (nucleophile) is an active-site residue. 189 to 194 (GAGEMS) serves as a coordination point for NADP(+).

Belongs to the glutamyl-tRNA reductase family. As to quaternary structure, homodimer.

It catalyses the reaction (S)-4-amino-5-oxopentanoate + tRNA(Glu) + NADP(+) = L-glutamyl-tRNA(Glu) + NADPH + H(+). Its pathway is porphyrin-containing compound metabolism; protoporphyrin-IX biosynthesis; 5-aminolevulinate from L-glutamyl-tRNA(Glu): step 1/2. In terms of biological role, catalyzes the NADPH-dependent reduction of glutamyl-tRNA(Glu) to glutamate 1-semialdehyde (GSA). The sequence is that of Glutamyl-tRNA reductase from Campylobacter lari (strain RM2100 / D67 / ATCC BAA-1060).